A 351-amino-acid chain; its full sequence is Neutral protease 2 homolog MGG_10927 (351 aa).

The N-terminal stretch at 1 to 16 (MKFSIGVSLLATLAGA) is a signal peptide. The propeptide occupies 17-177 (VNVDMAKRDT…AAFLAKRTIV (161 aa)). Disulfide bonds link C181/C253 and C260/C278. H303 contacts Zn(2+). E304 is an active-site residue. A Zn(2+)-binding site is contributed by H307.

The protein belongs to the peptidase M35 family. Zn(2+) is required as a cofactor.

It localises to the secreted. The catalysed reaction is Preferential cleavage of bonds with hydrophobic residues in P1'. Also 3-Asn-|-Gln-4 and 8-Gly-|-Ser-9 bonds in insulin B chain.. Its function is as follows. Secreted metalloproteinase that allows assimilation of proteinaceous substrates. Shows high activities on basic nuclear substrates such as histone and protamine. This chain is Neutral protease 2 homolog MGG_10927, found in Colletotrichum graminicola (strain M1.001 / M2 / FGSC 10212) (Maize anthracnose fungus).